We begin with the raw amino-acid sequence, 304 residues long: N-acetylmuramic acid 6-phosphate etherase (304 aa).

In terms of domain architecture, SIS spans 58 to 221 (IVDRMKQGGR…TTASMVKMGK (164 aa)). Residue E86 is the Proton donor of the active site. E117 is an active-site residue.

Belongs to the GCKR-like family. MurNAc-6-P etherase subfamily. Homodimer.

It catalyses the reaction N-acetyl-D-muramate 6-phosphate + H2O = N-acetyl-D-glucosamine 6-phosphate + (R)-lactate. The protein operates within amino-sugar metabolism; N-acetylmuramate degradation. In terms of biological role, specifically catalyzes the cleavage of the D-lactyl ether substituent of MurNAc 6-phosphate, producing GlcNAc 6-phosphate and D-lactate. In Clostridioides difficile (strain 630) (Peptoclostridium difficile), this protein is N-acetylmuramic acid 6-phosphate etherase.